The sequence spans 579 residues: uncharacterized protein (579 aa).

The next 3 helical transmembrane spans lie at 173–193 (IAMGLAGLAGGALIGLTGGLA), 196–216 (FVAAGLGTLFAGLGLGTMIGA), and 218–238 (YLGTLITSAPMITALFGGFGA).

It belongs to the TMCO4 family.

It localises to the cytoplasm. It is found in the nucleus membrane. This is an uncharacterized protein from Schizosaccharomyces pombe (strain 972 / ATCC 24843) (Fission yeast).